A 273-amino-acid chain; its full sequence is Phosphate import ATP-binding protein PstB 1 (273 aa).

The 242-residue stretch at 27-268 (ISIEHLSLYY…PLKKQTEDYI (242 aa)) folds into the ABC transporter domain. 59-66 (GPSGCGKS) provides a ligand contact to ATP.

The protein belongs to the ABC transporter superfamily. Phosphate importer (TC 3.A.1.7) family. As to quaternary structure, the complex is composed of two ATP-binding proteins (PstB), two transmembrane proteins (PstC and PstA) and a solute-binding protein (PstS).

Its subcellular location is the cell inner membrane. It carries out the reaction phosphate(out) + ATP + H2O = ADP + 2 phosphate(in) + H(+). Part of the ABC transporter complex PstSACB involved in phosphate import. Responsible for energy coupling to the transport system. This is Phosphate import ATP-binding protein PstB 1 from Vibrio cholerae serotype O1 (strain ATCC 39315 / El Tor Inaba N16961).